The following is a 388-amino-acid chain: Succinate--CoA ligase [ADP-forming] subunit beta (388 aa).

The ATP-grasp domain maps to 9–243 (KQLFHRYGIP…ESQLAPLEVR (235 aa)). ATP is bound by residues K45, 52 to 54 (GRG), E98, V101, and E106. Positions 198 and 212 each coordinate Mg(2+). Substrate-binding positions include N263 and 320–322 (GIM).

It belongs to the succinate/malate CoA ligase beta subunit family. Heterotetramer of two alpha and two beta subunits. Requires Mg(2+) as cofactor.

The catalysed reaction is succinate + ATP + CoA = succinyl-CoA + ADP + phosphate. It catalyses the reaction GTP + succinate + CoA = succinyl-CoA + GDP + phosphate. It functions in the pathway carbohydrate metabolism; tricarboxylic acid cycle; succinate from succinyl-CoA (ligase route): step 1/1. Succinyl-CoA synthetase functions in the citric acid cycle (TCA), coupling the hydrolysis of succinyl-CoA to the synthesis of either ATP or GTP and thus represents the only step of substrate-level phosphorylation in the TCA. The beta subunit provides nucleotide specificity of the enzyme and binds the substrate succinate, while the binding sites for coenzyme A and phosphate are found in the alpha subunit. In Syntrophotalea carbinolica (strain DSM 2380 / NBRC 103641 / GraBd1) (Pelobacter carbinolicus), this protein is Succinate--CoA ligase [ADP-forming] subunit beta.